A 435-amino-acid chain; its full sequence is Cyclin-dependent kinase 15 (435 aa).

The region spanning 103 to 387 is the Protein kinase domain; it reads YLNLEKLGEG…AQEALVHDYF (285 aa). ATP-binding positions include 109–117 and lysine 132; that span reads LGEGSYATV. The active-site Proton acceptor is aspartate 224.

It belongs to the protein kinase superfamily. CMGC Ser/Thr protein kinase family. CDC2/CDKX subfamily. The cofactor is Mg(2+).

It catalyses the reaction L-seryl-[protein] + ATP = O-phospho-L-seryl-[protein] + ADP + H(+). The catalysed reaction is L-threonyl-[protein] + ATP = O-phospho-L-threonyl-[protein] + ADP + H(+). Functionally, serine/threonine-protein kinase that acts like an antiapoptotic protein that counters TRAIL/TNFSF10-induced apoptosis by inducing phosphorylation of BIRC5 at 'Thr-34'. The chain is Cyclin-dependent kinase 15 (CDK15) from Homo sapiens (Human).